We begin with the raw amino-acid sequence, 186 residues long: Elongation factor P (186 aa).

It belongs to the elongation factor P family.

It is found in the cytoplasm. It functions in the pathway protein biosynthesis; polypeptide chain elongation. In terms of biological role, involved in peptide bond synthesis. Stimulates efficient translation and peptide-bond synthesis on native or reconstituted 70S ribosomes in vitro. Probably functions indirectly by altering the affinity of the ribosome for aminoacyl-tRNA, thus increasing their reactivity as acceptors for peptidyl transferase. The sequence is that of Elongation factor P from Prochlorococcus marinus (strain MIT 9303).